A 567-amino-acid chain; its full sequence is Potassium-transporting ATPase potassium-binding subunit (567 aa).

The next 11 membrane-spanning stretches (helical) occupy residues 3 to 23, 64 to 84, 136 to 156, 179 to 199, 254 to 274, 285 to 305, 330 to 350, 357 to 376, 421 to 441, 473 to 495, and 527 to 547; these read FIGW…VKPL, LTFT…IYAV, ALTH…MALI, LYVL…QGMP, LSNF…TNVF, WAIL…AYWA, FGIV…CGAV, FTAL…EIIV, MLAI…AVVL, AFGG…MFVG, and GGLF…LTFF.

The protein belongs to the KdpA family. In terms of assembly, the system is composed of three essential subunits: KdpA, KdpB and KdpC.

It localises to the cell inner membrane. Its function is as follows. Part of the high-affinity ATP-driven potassium transport (or Kdp) system, which catalyzes the hydrolysis of ATP coupled with the electrogenic transport of potassium into the cytoplasm. This subunit binds the periplasmic potassium ions and delivers the ions to the membrane domain of KdpB through an intramembrane tunnel. This Rhodopseudomonas palustris (strain ATCC BAA-98 / CGA009) protein is Potassium-transporting ATPase potassium-binding subunit.